A 399-amino-acid polypeptide reads, in one-letter code: MTRRLFTSESVTEGHPDKIADQISDGILDALLAEDPRSRVAVETLITTGQVHVAGEVTTQAYADIPSIVRRTILDIGYDSSRKGFDGASCGVSVSIGSQSADIAQGVDNAFELRTGASESALDAQGAGDQGMMFGFACSETPELMPMPIALAHRLSRRLAQVRREGVVPYLRPDGKTQVTVEYEGLRPVRLNTVLVSSQHAADVSLESLLTPDVREHVIAPEVEGLGLGLDVEDYRLLVNPTGRFEVGGPMGDAGLTGRKIIVDTYGGYARHGGGAFSGKDPSKVDRSAAYAMRWVAKNVVAAGLAERCEAQVAYAIGKAHPVSLFIETFGTETVPVERIEKAVTEVFDLRPAAIIRDLKLTRPIYSQTAAYGHFGRELPDFTWESTDRAADLKSVAGA.

Position 15 (His15) interacts with ATP. Asp17 serves as a coordination point for Mg(2+). Glu43 contributes to the K(+) binding site. 2 residues coordinate L-methionine: Glu56 and Gln99. Residues 99–109 (QSADIAQGVDN) are flexible loop. Residues 174-176 (DGK), 244-245 (RF), Asp253, 259-260 (RK), Ala276, and Lys280 each bind ATP. Asp253 is a binding site for L-methionine. Residue Lys284 coordinates L-methionine.

It belongs to the AdoMet synthase family. As to quaternary structure, homotetramer; dimer of dimers. Requires Mg(2+) as cofactor. The cofactor is K(+).

Its subcellular location is the cytoplasm. It catalyses the reaction L-methionine + ATP + H2O = S-adenosyl-L-methionine + phosphate + diphosphate. The protein operates within amino-acid biosynthesis; S-adenosyl-L-methionine biosynthesis; S-adenosyl-L-methionine from L-methionine: step 1/1. Catalyzes the formation of S-adenosylmethionine (AdoMet) from methionine and ATP. The overall synthetic reaction is composed of two sequential steps, AdoMet formation and the subsequent tripolyphosphate hydrolysis which occurs prior to release of AdoMet from the enzyme. The protein is S-adenosylmethionine synthase of Salinispora tropica (strain ATCC BAA-916 / DSM 44818 / JCM 13857 / NBRC 105044 / CNB-440).